The chain runs to 1419 residues: MIRLGAPQSLVLLTLLIATVLQCQGQDARKLGPKGQKGEPGDIKDIIGPKGPPGPQGPAGEQGPRGDRGDKGERGAPGPRGRDGEPGTPGNPGPPGPPGPPGPPGLGGGNFAAQMAGGFDEKAGGAQMGVMQGPMGPMGPRGPPGPAGAPGPQGFQGNPGEPGEPGVSGPIGPRGPPGPAGKPGDDGEAGKPGKAGERGLPGPQGARGFPGTPGLPGVKGHRGYPGLDGAKGEAGAPGVKGESGSPGENGSPGPMGPRGLPGERGRTGPAGAAGARGNDGQPGPAGPPGPVGPAGGPGFLGAPGAKGEAGPTGARGPEGAQGSRGEPGNPGSPGPAGASGNPGTDGIPGAKGSAGAPGIAGAPGFPGPRGPPGPQGATGPLGPKGQTGEPGIAGFKGEQGPKGETGPAGPQGAPGPAGEEGKRGARGEPGGAGPIGPPGERGAPGNRGFPGQDGLAGPKGAPGERGPSGLAGPKGANGDPGRPGEPGLPGARGLTGRPGDAGPQGKVGPSGAPGEDGRPGPPGPQGARGQPGVMGFPGPKGANGEPGKAGEKGLAGAPGLRGLPGKDGETGAAGPPGPSGPAGERGEQGAPGPSGFQGLPGPPGPPGEGGKQGDQGIPGEAGAPGLVGPRGERGFPGERGSPGAQGLQGPRGLPGTPGTDGPKGAAGPDGPPGAQGPPGLQGMPGERGAAGIAGPKGDRGDVGEKGPEGAPGKDGGRGLTGPIGPPGPAGANGEKGEVGPPGPSGSTGARGAPGERGETGPPGPAGFAGPPGADGQPGAKGDQGEAGQKGDAGAPGPQGPSGAPGPQGPTGVTGPKGARGAQGPPGATGFPGAAGRVGPPGSNGNPGPAGPPGPAGKDGPKGARGDTGAPGRAGDPGLQGPAGAPGEKGEPGDDGPSGSDGPPGPQGLAGQRGIVGLPGQRGERGFPGLPGPSGEPGKQGAPGASGDRGPPGPVGPPGLTGPAGEPGREGSPGADGPPGRDGAAGVKGDRGETGALGAPGAPGPPGSPGPAGPTGKQGDRGEAGAQGPMGPSGPAGARGIAGPQGPRGDKGEAGEPGERGLKGHRGFTGLQGLPGPPGPSGDQGTSGPAGPSGPRGPPGPVGPSGKDGSNGIPGPIGPPGPRGRSGETGPAGPPGNPGPPGPPGPPGPGIDMSAFAGLGQREKGPDPLQYMRADEADSTLRQHDVEVDATLKSLNNQIESIRSPDGSRKNPARTCQDLKLCHPEWKSGDYWIDPNQGCTLDAMKVFCNMETGESCVYPNPATVPRKNWWSSKSKEKKHIWFGETMNGGFHFSYGDGNLAPNTANVQMTFLRLLSTEGSQNITYHCKNSIAYLDEAAGNLKKALLIQGSNDVEMRAEGNSRFTYTALKDGCTKHTGKWGKTIIEYRSQKTSRLPIVDIAPMDIGGPDQEFGVDIGPVCFL.

The signal sequence occupies residues 1 to 25 (MIRLGAPQSLVLLTLLIATVLQCQG). Residues 26–113 (QDARKLGPKG…PGLGGGNFAA (88 aa)) constitute a propeptide, N-terminal propeptide. The interval 28-1168 (ARKLGPKGQK…GQREKGPDPL (1141 aa)) is disordered. Basic and acidic residues-rich tracts occupy residues 36–47 (QKGEPGDIKDII) and 64–85 (PRGDRGDKGERGAPGPRGRDGE). The segment covering 89–104 (PGNPGPPGPPGPPGPP) has biased composition (pro residues). A 5-hydroxylysine modification is found at K122. K122 carries an O-linked (Gal...) hydroxylysine glycan. Residues 124–135 (GGAQMGVMQGPM) show a composition bias toward low complexity. Positions 133 to 1146 (GPMGPMGPRG…PGPPGPPGPP (1014 aa)) are triple-helical region. The segment covering 140–149 (PRGPPGPAGA) has biased composition (pro residues). The segment covering 150–171 (PGPQGFQGNPGEPGEPGVSGPI) has biased composition (low complexity). Basic and acidic residues predominate over residues 183–197 (PGDDGEAGKPGKAGE). A 5-hydroxylysine mark is found at K219, K231, and K240. Residues K219, K231, and K240 are each glycosylated (O-linked (Gal...) hydroxylysine). Low complexity-rich tracts occupy residues 242–252 (ESGSPGENGSP) and 267–282 (TGPAGAAGARGNDGQP). The segment covering 292 to 301 (GPAGGPGFLG) has biased composition (gly residues). K306 carries the post-translational modification 5-hydroxylysine. O-linked (Gal...) hydroxylysine glycosylation is present at K306. The segment covering 335–363 (PAGASGNPGTDGIPGAKGSAGAPGIAGAP) has biased composition (low complexity). The segment covering 365 to 374 (FPGPRGPPGP) has biased composition (pro residues). Residues 404–417 (ETGPAGPQGAPGPA) are compositionally biased toward low complexity. K540 and K552 each carry 5-hydroxylysine. K540 and K552 each carry an O-linked (Gal...) hydroxylysine glycan. Residues 554–563 (LAGAPGLRGL) show a composition bias toward low complexity. Residues P591 and P600 each carry the 4-hydroxyproline modification. P602 is subject to 3-hydroxyproline; partial. A 4-hydroxyproline mark is found at P603 and P606. The segment covering 638 to 668 (ERGSPGAQGLQGPRGLPGTPGTDGPKGAAGP) has biased composition (low complexity). Residues 696-707 (KGDRGDVGEKGP) show a composition bias toward basic and acidic residues. Low complexity-rich tracts occupy residues 765–780 (AGFAGPPGADGQPGAK) and 809–846 (PTGVTGPKGARGAQGPPGATGFPGAAGRVGPPGSNGNP). P839 carries the post-translational modification 3-hydroxyproline; partial. Residues P840, P846, and P852 each carry the 4-hydroxyproline modification. Residues 1001 to 1011 (APGPPGSPGPA) are compositionally biased toward pro residues. Residues 1047 to 1061 (RGDKGEAGEPGERGL) show a composition bias toward basic and acidic residues. Residue P1076 is modified to 3-hydroxyproline; partial. Composition is skewed to low complexity over residues 1080–1089 (SGDQGTSGPA) and 1103–1113 (PSGKDGSNGIP). P1113 is subject to 4-hydroxyproline. P1118 is modified (3-hydroxyproline). 4-hydroxyproline is present on P1119. The span at 1131–1148 (AGPPGNPGPPGPPGPPGP) shows a compositional bias: pro residues. P1133 is modified (3-hydroxyproline; partial). A 4-hydroxyproline mark is found at P1134 and P1137. P1139 bears the 3-hydroxyproline; partial mark. A 4-hydroxyproline mark is found at P1140 and P1143. P1145 is modified (3-hydroxyproline; partial). Position 1146 is a 4-hydroxyproline (P1146). The interval 1147 to 1173 (GPGIDMSAFAGLGQREKGPDPLQYMRA) is nonhelical region (C-terminal). One can recognise a Fibrillar collagen NC1 domain in the interval 1185-1419 (VEVDATLKSL…GVDIGPVCFL (235 aa)). Intrachain disulfides connect C1215–C1247, C1255–C1417, and C1325–C1370. Residues D1233, N1235, Q1236, C1238, and D1241 each coordinate Ca(2+). A glycan (N-linked (GlcNAc...) asparagine) is linked at N1320.

The protein belongs to the fibrillar collagen family. In terms of assembly, homotrimers of alpha 1(II) chains. Contains mostly 4-hydroxyproline. Prolines at the third position of the tripeptide repeating unit (G-X-P) are 4-hydroxylated in some or all of the chains. Post-translationally, contains 3-hydroxyproline at a few sites. This modification occurs on the first proline residue in the sequence motif Gly-Pro-Hyp, where Hyp is 4-hydroxyproline. In terms of processing, lysine residues at the third position of the tripeptide repeating unit (G-X-Y) are 5-hydroxylated in some or all of the chains. O-glycosylated on hydroxylated lysine residues. The O-linked glycan consists of a Glc-Gal disaccharide. In terms of tissue distribution, expressed in chondrocytes.

It localises to the secreted. The protein resides in the extracellular space. The protein localises to the extracellular matrix. Type II collagen is specific for cartilaginous tissues. It is essential for the normal embryonic development of the skeleton, for linear growth and for the ability of cartilage to resist compressive forces. This Rattus norvegicus (Rat) protein is Collagen alpha-1(II) chain.